A 56-amino-acid polypeptide reads, in one-letter code: Large ribosomal subunit protein bL33 (56 aa).

It belongs to the bacterial ribosomal protein bL33 family.

The protein is Large ribosomal subunit protein bL33 (rpmG) of Treponema pallidum (strain Nichols).